Here is a 359-residue protein sequence, read N- to C-terminus: Protein Wnt-2 (359 aa).

The N-terminal stretch at 1–25 (MNAPLAGIWPWLPLLWAWLVPEVSS) is a signal peptide. 11 disulfides stabilise this stretch: C75–C86, C126–C134, C136–C156, C205–C219, C207–C214, C277–C308, C293–C303, C307–C347, C323–C338, C325–C335, and C330–C331. The O-palmitoleoyl serine; by PORCN moiety is linked to residue S211. An N-linked (GlcNAc...) asparagine glycan is attached at N294.

The protein belongs to the Wnt family. Palmitoleoylation is required for efficient binding to frizzled receptors. Depalmitoleoylation leads to Wnt signaling pathway inhibition.

It localises to the secreted. Its subcellular location is the extracellular space. The protein resides in the extracellular matrix. Its function is as follows. Ligand for members of the frizzled family of seven transmembrane receptors. Probable developmental protein. May be a signaling molecule which affects the development of discrete regions of tissues. Is likely to signal over only few cell diameters. The polypeptide is Protein Wnt-2 (WNT2) (Echinops telfairi (Lesser hedgehog tenrec)).